An 842-amino-acid polypeptide reads, in one-letter code: Protein P (842 aa).

The segment at 1 to 177 is terminal protein domain (TP); sequence MPLSYQHFRK…FCGSPYSWEQ (177 aa). The segment at 178–346 is spacer; that stretch reads ELQHGRLVFQ…YCLTHIVNLL (169 aa). The segment at 218-274 is disordered; sequence LKQSRLGLQPQQGSLARGKSGRSGSIRARVPPTTRRSFGVEPSGSGHIDNRASSTSS. Residues 347–690 are polymerase/reverse transcriptase domain (RT); the sequence is EDWGPCTEHG…YLHLYPVARR (344 aa). The Reverse transcriptase domain maps to 357–600; that stretch reads EHNIRIPRTP…YSLNFMGYVI (244 aa). Asp429, Asp551, and Asp552 together coordinate Mg(2+).

It belongs to the hepadnaviridae P protein family.

The catalysed reaction is DNA(n) + a 2'-deoxyribonucleoside 5'-triphosphate = DNA(n+1) + diphosphate. It catalyses the reaction Endonucleolytic cleavage to 5'-phosphomonoester.. Activated by host HSP70 and HSP40 in vitro to be able to bind the epsilon loop of the pgRNA. Because deletion of the RNase H region renders the protein partly chaperone-independent, the chaperones may be needed indirectly to relieve occlusion of the RNA-binding site by this domain. Inhibited by several reverse-transcriptase inhibitors: Lamivudine, Adefovir and Entecavir. Multifunctional enzyme that converts the viral RNA genome into dsDNA in viral cytoplasmic capsids. This enzyme displays a DNA polymerase activity that can copy either DNA or RNA templates, and a ribonuclease H (RNase H) activity that cleaves the RNA strand of RNA-DNA heteroduplexes in a partially processive 3'- to 5'-endonucleasic mode. Neo-synthesized pregenomic RNA (pgRNA) are encapsidated together with the P protein, and reverse-transcribed inside the nucleocapsid. Initiation of reverse-transcription occurs first by binding the epsilon loop on the pgRNA genome, and is initiated by protein priming, thereby the 5'-end of (-)DNA is covalently linked to P protein. Partial (+)DNA is synthesized from the (-)DNA template and generates the relaxed circular DNA (RC-DNA) genome. After budding and infection, the RC-DNA migrates in the nucleus, and is converted into a plasmid-like covalently closed circular DNA (cccDNA). The activity of P protein does not seem to be necessary for cccDNA generation, and is presumably released from (+)DNA by host nuclear DNA repair machinery. The polypeptide is Protein P (Hepatitis B virus genotype C subtype adr (isolate Korea/Kim/1989) (HBV-C)).